Here is a 605-residue protein sequence, read N- to C-terminus: E3 ubiquitin-protein ligase synoviolin A (605 aa).

Residues 1 to 19 (MTGASLALTAAVVAHAYYL) form a helical membrane-spanning segment. Residues 20-35 (KNQFYPTVVYLTKSSP) are Lumenal-facing. The chain crosses the membrane as a helical span at residues 36 to 56 (SMAVLYIQAFVLVFLLGKFMG). Residues 57–92 (KVFFGQLRAAEMEHLLERSWYAVTETCLAFTVFRDD) are Cytoplasmic-facing. Residues 93 to 113 (FSPRFVALFTLLLFLKCFHWL) traverse the membrane as a helical segment. Topologically, residues 114–129 (AEDRVDFMERSPNISW) are lumenal. The chain crosses the membrane as a helical span at residues 130-150 (LFHFRILALMLLLGVLDAFFV). The Cytoplasmic portion of the chain corresponds to 151–163 (SHAYHSLVIRGAS). A helical membrane pass occupies residues 164-184 (VQLVFGFEYAILMTVILTVFI). Over 185-218 (KYILHSVDLQSENPWDNKAVYMLYTELFTGFIKV) the chain is Lumenal. The helical transmembrane segment at 219–239 (LLYVAFMTIMVKVHTFPLFAI) threads the bilayer. Residues 230 to 264 (KVHTFPLFAIRPMYLAMRQFKKAVTDAIMSRRAIR) are interaction with p53/TP53. The Cytoplasmic segment spans residues 240–605 (RPMYLAMRQF…KLETGTTDSQ (366 aa)). Cys285, Cys288, Cys301, His303, His306, Cys309, Cys320, and Cys323 together coordinate Zn(2+). The RING-type; atypical zinc finger occupies 285 to 324 (CIICREEMVTGAKRLPCNHIFHTSCLRSWFQRQQTCPTCR). Over residues 334 to 355 (TQPQTPTEQQNQHQNQAQQQPT) the composition is skewed to low complexity. A disordered region spans residues 334–433 (TQPQTPTEQQ…QPGAALPGFP (100 aa)). Residues 356 to 391 (PVIPPQPNFPPGILPPFPPGMFPLWPPMGPFPPVPG) show a composition bias toward pro residues. Low complexity predominate over residues 403–414 (PGSSSGSSPRPG). A compositionally biased stretch (polar residues) spans 415-424 (ETSNVGSESQ). Positions 465–496 (EELRAMEGHERQNLEARLQCLQNIHTLLDAAM) form a coiled coil. Residues 513–605 (QPPISSTSTS…KLETGTTDSQ (93 aa)) are disordered. The segment covering 516–539 (ISSTSTSTSSAASASTAPTTSNIS) has biased composition (low complexity). A compositionally biased stretch (polar residues) spans 546–555 (DTTSTVTNTE). Over residues 556–579 (SSQQSAPPAPVSVETLSGAEGGET) the composition is skewed to low complexity.

It belongs to the HRD1 family. Homodimer.

The protein localises to the endoplasmic reticulum membrane. The catalysed reaction is S-ubiquitinyl-[E2 ubiquitin-conjugating enzyme]-L-cysteine + [acceptor protein]-L-lysine = [E2 ubiquitin-conjugating enzyme]-L-cysteine + N(6)-ubiquitinyl-[acceptor protein]-L-lysine.. It participates in protein modification; protein ubiquitination. Its function is as follows. E3 ubiquitin-protein ligase which accepts ubiquitin specifically from endoplasmic reticulum-associated UBC7 E2 ligase and transfers it to substrates, promoting their degradation. Component of the endoplasmic reticulum quality control (ERQC) system also called ER-associated degradation (ERAD) involved in ubiquitin-dependent degradation of misfolded endoplasmic reticulum proteins. Also promotes the degradation of normal but naturally short-lived proteins. Protects cells from ER stress-induced apoptosis. Sequesters p53 in the cytoplasm and promotes its degradation, thereby negatively regulating its biological function in transcription, cell cycle regulation and apoptosis. This is E3 ubiquitin-protein ligase synoviolin A (syvn1-a) from Xenopus laevis (African clawed frog).